Here is a 388-residue protein sequence, read N- to C-terminus: Alanine racemase (388 aa).

K40 (proton acceptor; specific for D-alanine) is an active-site residue. K40 is subject to N6-(pyridoxal phosphate)lysine. Substrate is bound at residue R137. Catalysis depends on Y269, which acts as the Proton acceptor; specific for L-alanine. M318 provides a ligand contact to substrate.

Belongs to the alanine racemase family. Pyridoxal 5'-phosphate serves as cofactor.

The catalysed reaction is L-alanine = D-alanine. The protein operates within amino-acid biosynthesis; D-alanine biosynthesis; D-alanine from L-alanine: step 1/1. Functionally, catalyzes the interconversion of L-alanine and D-alanine. May also act on other amino acids. The polypeptide is Alanine racemase (alr) (Halalkalibacterium halodurans (strain ATCC BAA-125 / DSM 18197 / FERM 7344 / JCM 9153 / C-125) (Bacillus halodurans)).